A 302-amino-acid chain; its full sequence is GTPase Era (302 aa).

The Era-type G domain maps to 4–171; that stretch reads KAGFVALVGR…KEKIVSLLPE (168 aa). Positions 12–19 are G1; the sequence is GRTNVGKS. 12-19 lines the GTP pocket; the sequence is GRTNVGKS. The G2 stretch occupies residues 38–42; that stretch reads QTTRN. Residues 59–62 are G3; sequence DTPG. Residues 59–63 and 121–124 each bind GTP; these read DTPGI and NKID. The tract at residues 121–124 is G4; sequence NKID. The tract at residues 150 to 152 is G5; that stretch reads ISA. One can recognise a KH type-2 domain in the interval 202 to 280; the sequence is LEEEVPHGVY…FLDLWVKTRK (79 aa).

This sequence belongs to the TRAFAC class TrmE-Era-EngA-EngB-Septin-like GTPase superfamily. Era GTPase family. In terms of assembly, monomer.

It localises to the cytoplasm. The protein localises to the cell membrane. Functionally, an essential GTPase that binds both GDP and GTP, with rapid nucleotide exchange. Plays a role in 16S rRNA processing and 30S ribosomal subunit biogenesis and possibly also in cell cycle regulation and energy metabolism. This Thermoanaerobacter pseudethanolicus (strain ATCC 33223 / 39E) (Clostridium thermohydrosulfuricum) protein is GTPase Era.